The following is an 83-amino-acid chain: Small ribosomal subunit protein eS21 (83 aa).

The protein belongs to the eukaryotic ribosomal protein eS21 family. Component of the 40S small ribosomal subunit.

It localises to the cytoplasm. The protein resides in the cytosol. It is found in the rough endoplasmic reticulum. This is Small ribosomal subunit protein eS21 (RpS21) from Agriotes lineatus (Lined click beetle).